The primary structure comprises 689 residues: Beta-adrenergic receptor kinase 1 (689 aa).

Positions 1–190 (MADLEAVLAD…ELNIHLTMND (190 aa)) are N-terminal. The 122-residue stretch at 54 to 175 (TFEKIFSQKL…IESEKFTRFC (122 aa)) folds into the RGS domain. Residues 191–453 (FSVHRIIGRG…AQEVKEDPFF (263 aa)) enclose the Protein kinase domain. Residues 197–205 (IGRGGFGEV) and Lys-220 contribute to the ATP site. Asp-317 (proton acceptor) is an active-site residue. Residues 454–521 (KAVDWQMVLL…TISERWQQEV (68 aa)) form the AGC-kinase C-terminal domain. The PH domain occupies 558 to 652 (DCIMHGYMSK…WKKELRDVYR (95 aa)). Residues 665–689 (KNKPRSPVVELSKMPLTQRGSANGL) are disordered. Ser-670 carries the post-translational modification Phosphoserine.

The protein belongs to the protein kinase superfamily. AGC Ser/Thr protein kinase family. GPRK subfamily. In terms of assembly, interacts with the heterodimer formed by GNB1 and GNG2. Interacts with GIT1. Interacts with, and phosphorylates chemokine-stimulated CCR5. Interacts with ARRB1. Interacts with LPAR1 and LPAR2. Interacts with RALA in response to LPAR1 activation. ADRBK1 and RALA mutually inhibit each other's binding to LPAR1. Interacts with ADRB2.

It is found in the cytoplasm. The protein resides in the cell membrane. Its subcellular location is the postsynapse. The protein localises to the presynapse. The enzyme catalyses [beta-adrenergic receptor] + ATP = [beta-adrenergic receptor]-phosphate + ADP + H(+). With respect to regulation, in contrast to other AGC family kinases, the catalytic activity is solely regulated by the binding of substrates and ligands, not by phosphorylation of the kinase domain. In terms of biological role, specifically phosphorylates the agonist-occupied form of the beta-adrenergic and closely related receptors, probably inducing a desensitization of them. Does not act on HTR1B/5-hydroxytryptamine 1B receptor. Key regulator of LPAR1 signaling. Competes with RALA for binding to LPAR1 thus affecting the signaling properties of the receptor. Desensitizes LPAR1 and LPAR2 in a phosphorylation-independent manner. Inhibits relaxation of airway smooth muscle in response to blue light. In Didelphis virginiana (North American opossum), this protein is Beta-adrenergic receptor kinase 1.